A 906-amino-acid polypeptide reads, in one-letter code: NADH-quinone oxidoreductase subunit G (906 aa).

Residues 2 to 83 (AKIYVDSKIY…GAIISIKSTE (82 aa)) form the 2Fe-2S ferredoxin-type domain. [2Fe-2S] cluster-binding residues include C34, C45, C48, and C67. The 40-residue stretch at 83 to 122 (ESEVFRSAIVELLLTNHPHDCPVCEEGGHCHLQDMTVMVK) folds into the 4Fe-4S His(Cys)3-ligated-type domain. Residues H99, C103, C106, C112, C151, C154, C157, C201, C228, C231, C235, and C263 each coordinate [4Fe-4S] cluster. The 4Fe-4S Mo/W bis-MGD-type domain occupies 221–277 (MQYAPGICHNCSVGCNISIGERYGEIRRIENRYHENINHYLICDLGRFGYSHTNLNT).

The protein belongs to the complex I 75 kDa subunit family. Composed of 13 different subunits. Subunits NuoCD, E, F, and G constitute the peripheral sector of the complex. It depends on [2Fe-2S] cluster as a cofactor. The cofactor is [4Fe-4S] cluster.

It catalyses the reaction a quinone + NADH + 5 H(+)(in) = a quinol + NAD(+) + 4 H(+)(out). In terms of biological role, NDH-1 shuttles electrons from NADH, via FMN and iron-sulfur (Fe-S) centers, to quinones in the respiratory chain. Couples the redox reaction to proton translocation (for every two electrons transferred, four hydrogen ions are translocated across the cytoplasmic membrane), and thus conserves the redox energy in a proton gradient. The polypeptide is NADH-quinone oxidoreductase subunit G (nuoG) (Buchnera aphidicola subsp. Acyrthosiphon pisum (strain APS) (Acyrthosiphon pisum symbiotic bacterium)).